Here is a 160-residue protein sequence, read N- to C-terminus: Cytochrome b6-f complex subunit 4 (160 aa).

The next 3 helical transmembrane spans lie at Leu36 to Val56, Leu95 to Glu115, and Leu131 to Ile151.

The protein belongs to the cytochrome b family. PetD subfamily. In terms of assembly, the 4 large subunits of the cytochrome b6-f complex are cytochrome b6, subunit IV (17 kDa polypeptide, petD), cytochrome f and the Rieske protein, while the 4 small subunits are petG, petL, petM and petN. The complex functions as a dimer.

The protein resides in the plastid. The protein localises to the chloroplast thylakoid membrane. In terms of biological role, component of the cytochrome b6-f complex, which mediates electron transfer between photosystem II (PSII) and photosystem I (PSI), cyclic electron flow around PSI, and state transitions. This Thalassiosira pseudonana (Marine diatom) protein is Cytochrome b6-f complex subunit 4.